The sequence spans 137 residues: Large ribosomal subunit protein uL16 (137 aa).

Belongs to the universal ribosomal protein uL16 family. In terms of assembly, part of the 50S ribosomal subunit.

Binds 23S rRNA and is also seen to make contacts with the A and possibly P site tRNAs. The sequence is that of Large ribosomal subunit protein uL16 from Stenotrophomonas maltophilia (strain R551-3).